The primary structure comprises 460 residues: Hydroxymethylglutaryl-CoA synthase MYCGRDRAFT_54740 (460 aa).

A35 contributes to the (3S)-3-hydroxy-3-methylglutaryl-CoA binding site. E86 acts as the Proton donor/acceptor in catalysis. Positions 120, 158, 162, 212, 262, 271, 339, and 373 each coordinate (3S)-3-hydroxy-3-methylglutaryl-CoA. C120 serves as the catalytic Acyl-thioester intermediate. The active-site Proton donor/acceptor is the H262.

This sequence belongs to the thiolase-like superfamily. HMG-CoA synthase family.

The catalysed reaction is acetoacetyl-CoA + acetyl-CoA + H2O = (3S)-3-hydroxy-3-methylglutaryl-CoA + CoA + H(+). It participates in siderophore biosynthesis. Its function is as follows. Hydroxymethylglutaryl-CoA synthase involved in the biosynthesis of a ferrichrome A-like siderophors which may contribute to organismal virulence. The first step of siderophore biosynthesis is performed by the HMG-CoA synthase (HMGS) MYCGRDRAFT_54740 which catalyzes the generation of HMG-CoA and CoA using acetoacetyl-CoA and acetyl-CoA as substrates. The enoyl-CoA isomerase/hydratase MYCGRDRAFT_76805 then catalyzes the conversion of HMG-CoA to methylglutaconyl-CoA. The acyltransferase MYCGRDRAFT_85486 then fuses methylglutaconyl-CoA with hydroxyornithine to yield methylglutaconyl hydroxyornithine. Methylglutaconyl hydroxyornithine is then available for use by the nonribosomal peptide synthetase NRPS2 to generate the ferrichrome A-like siderophore. The chain is Hydroxymethylglutaryl-CoA synthase MYCGRDRAFT_54740 (ERG13) from Zymoseptoria tritici (strain CBS 115943 / IPO323) (Speckled leaf blotch fungus).